The sequence spans 171 residues: Laminin subunit beta-1 (171 aa).

An N-terminal signal peptide occupies residues 1 to 29 (MNGRTQNLWFSTFRLVIVYALFFAKLCFG). 5 disulfide bridges follow: C59–C69, C72–C81, C84–C100, C103–C118, and C105–C128. Laminin EGF-like domains are found at residues 66 to 102 (TGVCNNCLHNTKGTNCQLCKDGYYGNALLGTENVCQR), 103 to 160 (CQCP…TCKK), and 161 to 171 (CLCNGNINSAS). N130 carries N-linked (GlcNAc...) asparagine glycosylation. Disulfide bonds link C131–C140 and C143–C158.

Laminin is a complex glycoprotein, consisting of three different polypeptide chains (alpha, beta, gamma), which are bound to each other by disulfide bonds into a cross-shaped molecule comprising one long and three short arms with globules at each end.

The protein resides in the secreted. It localises to the extracellular space. Its subcellular location is the extracellular matrix. It is found in the basement membrane. In terms of biological role, binding to cells via a high affinity receptor, laminin is thought to mediate the attachment, migration and organization of cells into tissues during embryonic development by interacting with other extracellular matrix components. The protein is Laminin subunit beta-1 of Hydra vulgaris (Hydra).